The chain runs to 271 residues: MEAEGLDWLLVPLHQLVSWGAAAAMVFGGVVPYVPQYRDIRRTQNADGFSTYVCLVLLVANILRILFWFGRRFESPLLWQSAIMILTMLLMLKLCTEVRVANELNARRRSFTAADSKDEEVKVAPRRSFLDFDPHHFWQWSSFSDYVQCVLAFTGVAGYITYLSIDSALFVETLGFLAVLTEAMLGVPQLYRNHRHQSTEGMSIKMVLMWTSGDAFKTAYFLLKGAPLQFSVCGLLQVLVDLAILGQAYAFARHPQKPAPHAVHPTGTKAL.

Transmembrane regions (helical) follow at residues 8-28 (WLLV…MVFG), 49-69 (FSTY…LFWF), and 76-96 (PLLW…KLCT). The PQ-loop 1 domain occupies 14–80 (HQLVSWGAAA…RRFESPLLWQ (67 aa)). S110 carries the post-translational modification Phosphoserine. A run of 3 helical transmembrane segments spans residues 145 to 165 (DYVQ…YLSI), 168 to 188 (ALFV…LGVP), and 232 to 252 (VCGL…YAFA). The region spanning 178-233 (AVLTEAMLGVPQLYRNHRHQSTEGMSIKMVLMWTSGDAFKTAYFLLKGAPLQFSVC) is the PQ-loop 2 domain.

The protein resides in the membrane. This is Solute carrier family 66 member 2 from Homo sapiens (Human).